Here is a 416-residue protein sequence, read N- to C-terminus: Phosphoribosylamine--glycine ligase (416 aa).

Positions 105–310 constitute an ATP-grasp domain; sequence KSFLKKYRIK…PLELILAATQ (206 aa). 131–192 serves as a coordination point for ATP; sequence IYSLTPPIVV…EEFLDGYELS (62 aa). Mg(2+) contacts are provided by Glu281 and Asn283.

It belongs to the GARS family. The cofactor is Mg(2+). It depends on Mn(2+) as a cofactor.

The enzyme catalyses 5-phospho-beta-D-ribosylamine + glycine + ATP = N(1)-(5-phospho-beta-D-ribosyl)glycinamide + ADP + phosphate + H(+). The protein operates within purine metabolism; IMP biosynthesis via de novo pathway; N(1)-(5-phospho-D-ribosyl)glycinamide from 5-phospho-alpha-D-ribose 1-diphosphate: step 2/2. This chain is Phosphoribosylamine--glycine ligase, found in Campylobacter jejuni subsp. jejuni serotype O:2 (strain ATCC 700819 / NCTC 11168).